The primary structure comprises 754 residues: 1,4-alpha-glucan branching enzyme GlgB (754 aa).

The active-site Nucleophile is the aspartate 431. The active-site Proton donor is glutamate 484.

The protein belongs to the glycosyl hydrolase 13 family. GlgB subfamily. In terms of assembly, monomer.

It catalyses the reaction Transfers a segment of a (1-&gt;4)-alpha-D-glucan chain to a primary hydroxy group in a similar glucan chain.. It functions in the pathway glycan biosynthesis; glycogen biosynthesis. Its function is as follows. Catalyzes the formation of the alpha-1,6-glucosidic linkages in glycogen by scission of a 1,4-alpha-linked oligosaccharide from growing alpha-1,4-glucan chains and the subsequent attachment of the oligosaccharide to the alpha-1,6 position. The protein is 1,4-alpha-glucan branching enzyme GlgB of Prochlorococcus marinus (strain MIT 9301).